The chain runs to 426 residues: Enolase (426 aa).

A disordered region spans residues 38-60 (PSGASTGAHEAVEKRDGDKSRYG). The segment covering 47-58 (EAVEKRDGDKSR) has biased composition (basic and acidic residues). Residue Gln163 participates in (2R)-2-phosphoglycerate binding. The Proton donor role is filled by Glu205. Positions 242, 285, and 312 each coordinate Mg(2+). 4 residues coordinate (2R)-2-phosphoglycerate: Lys337, Arg366, Ser367, and Lys388. Lys337 acts as the Proton acceptor in catalysis.

The protein belongs to the enolase family. Mg(2+) serves as cofactor.

Its subcellular location is the cytoplasm. The protein resides in the secreted. It is found in the cell surface. It carries out the reaction (2R)-2-phosphoglycerate = phosphoenolpyruvate + H2O. It participates in carbohydrate degradation; glycolysis; pyruvate from D-glyceraldehyde 3-phosphate: step 4/5. Its function is as follows. Catalyzes the reversible conversion of 2-phosphoglycerate (2-PG) into phosphoenolpyruvate (PEP). It is essential for the degradation of carbohydrates via glycolysis. In Caulobacter sp. (strain K31), this protein is Enolase.